Consider the following 223-residue polypeptide: Crossover junction endodeoxyribonuclease RuvC (223 aa).

Active-site residues include D12, E73, and D146. The Mg(2+) site is built by D12, E73, and D146. The interval 182–223 (QGKLGKAKSTLNARNNAQVTGDAQVRAGHPSQFERPDRADPR) is disordered. Over residues 190 to 202 (STLNARNNAQVTG) the composition is skewed to polar residues. Basic and acidic residues predominate over residues 213-223 (QFERPDRADPR).

This sequence belongs to the RuvC family. In terms of assembly, homodimer which binds Holliday junction (HJ) DNA. The HJ becomes 2-fold symmetrical on binding to RuvC with unstacked arms; it has a different conformation from HJ DNA in complex with RuvA. In the full resolvosome a probable DNA-RuvA(4)-RuvB(12)-RuvC(2) complex forms which resolves the HJ. It depends on Mg(2+) as a cofactor.

It localises to the cytoplasm. It catalyses the reaction Endonucleolytic cleavage at a junction such as a reciprocal single-stranded crossover between two homologous DNA duplexes (Holliday junction).. In terms of biological role, the RuvA-RuvB-RuvC complex processes Holliday junction (HJ) DNA during genetic recombination and DNA repair. Endonuclease that resolves HJ intermediates. Cleaves cruciform DNA by making single-stranded nicks across the HJ at symmetrical positions within the homologous arms, yielding a 5'-phosphate and a 3'-hydroxyl group; requires a central core of homology in the junction. The consensus cleavage sequence is 5'-(A/T)TT(C/G)-3'. Cleavage occurs on the 3'-side of the TT dinucleotide at the point of strand exchange. HJ branch migration catalyzed by RuvA-RuvB allows RuvC to scan DNA until it finds its consensus sequence, where it cleaves and resolves the cruciform DNA. This Corynebacterium efficiens (strain DSM 44549 / YS-314 / AJ 12310 / JCM 11189 / NBRC 100395) protein is Crossover junction endodeoxyribonuclease RuvC.